The chain runs to 96 residues: Large ribosomal subunit protein uL23 (96 aa).

This sequence belongs to the universal ribosomal protein uL23 family. As to quaternary structure, part of the 50S ribosomal subunit. Contacts protein L29, and trigger factor when it is bound to the ribosome.

Its function is as follows. One of the early assembly proteins it binds 23S rRNA. One of the proteins that surrounds the polypeptide exit tunnel on the outside of the ribosome. Forms the main docking site for trigger factor binding to the ribosome. The protein is Large ribosomal subunit protein uL23 of Endomicrobium trichonymphae.